The following is a 222-amino-acid chain: Ribose-5-phosphate isomerase A (222 aa).

Substrate-binding positions include 29 to 32 (TGST), 82 to 85 (DSAD), and 95 to 98 (KGGG). The Proton acceptor role is filled by Glu104. Lys122 provides a ligand contact to substrate.

The protein belongs to the ribose 5-phosphate isomerase family. In terms of assembly, homodimer.

It carries out the reaction aldehydo-D-ribose 5-phosphate = D-ribulose 5-phosphate. It participates in carbohydrate degradation; pentose phosphate pathway; D-ribose 5-phosphate from D-ribulose 5-phosphate (non-oxidative stage): step 1/1. Functionally, catalyzes the reversible conversion of ribose-5-phosphate to ribulose 5-phosphate. The sequence is that of Ribose-5-phosphate isomerase A from Blochmanniella floridana.